The following is a 254-amino-acid chain: 5-oxoprolinase subunit A (254 aa).

It belongs to the LamB/PxpA family. In terms of assembly, forms a complex composed of PxpA, PxpB and PxpC.

It catalyses the reaction 5-oxo-L-proline + ATP + 2 H2O = L-glutamate + ADP + phosphate + H(+). In terms of biological role, catalyzes the cleavage of 5-oxoproline to form L-glutamate coupled to the hydrolysis of ATP to ADP and inorganic phosphate. The protein is 5-oxoprolinase subunit A of Bacillus mycoides (strain KBAB4) (Bacillus weihenstephanensis).